Reading from the N-terminus, the 255-residue chain is GTP cyclohydrolase FolE2 (255 aa).

This sequence belongs to the GTP cyclohydrolase IV family.

The enzyme catalyses GTP + H2O = 7,8-dihydroneopterin 3'-triphosphate + formate + H(+). The protein operates within cofactor biosynthesis; 7,8-dihydroneopterin triphosphate biosynthesis; 7,8-dihydroneopterin triphosphate from GTP: step 1/1. In terms of biological role, converts GTP to 7,8-dihydroneopterin triphosphate. This Syntrophus aciditrophicus (strain SB) protein is GTP cyclohydrolase FolE2.